Here is a 398-residue protein sequence, read N- to C-terminus: Tryptophan synthase beta chain (398 aa).

K88 bears the N6-(pyridoxal phosphate)lysine mark.

The protein belongs to the TrpB family. As to quaternary structure, tetramer of two alpha and two beta chains. It depends on pyridoxal 5'-phosphate as a cofactor.

The catalysed reaction is (1S,2R)-1-C-(indol-3-yl)glycerol 3-phosphate + L-serine = D-glyceraldehyde 3-phosphate + L-tryptophan + H2O. Its pathway is amino-acid biosynthesis; L-tryptophan biosynthesis; L-tryptophan from chorismate: step 5/5. In terms of biological role, the beta subunit is responsible for the synthesis of L-tryptophan from indole and L-serine. The protein is Tryptophan synthase beta chain of Mannheimia succiniciproducens (strain KCTC 0769BP / MBEL55E).